The sequence spans 290 residues: Lipoyl synthase (290 aa).

Cys-36, Cys-41, Cys-47, Cys-62, Cys-66, Cys-69, and Ser-275 together coordinate [4Fe-4S] cluster. The Radical SAM core domain occupies 48-264 (FSKKTATFMI…KEEALKIGFS (217 aa)).

It belongs to the radical SAM superfamily. Lipoyl synthase family. [4Fe-4S] cluster is required as a cofactor.

It localises to the cytoplasm. The catalysed reaction is [[Fe-S] cluster scaffold protein carrying a second [4Fe-4S](2+) cluster] + N(6)-octanoyl-L-lysyl-[protein] + 2 oxidized [2Fe-2S]-[ferredoxin] + 2 S-adenosyl-L-methionine + 4 H(+) = [[Fe-S] cluster scaffold protein] + N(6)-[(R)-dihydrolipoyl]-L-lysyl-[protein] + 4 Fe(3+) + 2 hydrogen sulfide + 2 5'-deoxyadenosine + 2 L-methionine + 2 reduced [2Fe-2S]-[ferredoxin]. The protein operates within protein modification; protein lipoylation via endogenous pathway; protein N(6)-(lipoyl)lysine from octanoyl-[acyl-carrier-protein]: step 2/2. Its function is as follows. Catalyzes the radical-mediated insertion of two sulfur atoms into the C-6 and C-8 positions of the octanoyl moiety bound to the lipoyl domains of lipoate-dependent enzymes, thereby converting the octanoylated domains into lipoylated derivatives. This Alkaliphilus metalliredigens (strain QYMF) protein is Lipoyl synthase.